Reading from the N-terminus, the 119-residue chain is Holo-[acyl-carrier-protein] synthase (119 aa).

Mg(2+) is bound by residues Asp-8 and Glu-59.

This sequence belongs to the P-Pant transferase superfamily. AcpS family. It depends on Mg(2+) as a cofactor.

It localises to the cytoplasm. The catalysed reaction is apo-[ACP] + CoA = holo-[ACP] + adenosine 3',5'-bisphosphate + H(+). Transfers the 4'-phosphopantetheine moiety from coenzyme A to a Ser of acyl-carrier-protein. The chain is Holo-[acyl-carrier-protein] synthase from Streptococcus agalactiae serotype Ia (strain ATCC 27591 / A909 / CDC SS700).